We begin with the raw amino-acid sequence, 96 residues long: DNA-directed RNA polymerase subunit Rpo11 (96 aa).

It belongs to the archaeal Rpo11/eukaryotic RPB11/RPC19 RNA polymerase subunit family. Part of the RNA polymerase complex.

The protein resides in the cytoplasm. The catalysed reaction is RNA(n) + a ribonucleoside 5'-triphosphate = RNA(n+1) + diphosphate. Functionally, DNA-dependent RNA polymerase (RNAP) catalyzes the transcription of DNA into RNA using the four ribonucleoside triphosphates as substrates. This is DNA-directed RNA polymerase subunit Rpo11 from Methanococcus maripaludis (strain DSM 14266 / JCM 13030 / NBRC 101832 / S2 / LL).